The sequence spans 513 residues: 2-isopropylmalate synthase (513 aa).

Residues 4-268 enclose the Pyruvate carboxyltransferase domain; the sequence is IKIFDTTLRD…ETGIRTELIY (265 aa). 4 residues coordinate Mn(2+): aspartate 13, histidine 203, histidine 205, and asparagine 239. A regulatory domain region spans residues 392–513; sequence RLVHFHVHTG…GLLRKNGGVE (122 aa).

Belongs to the alpha-IPM synthase/homocitrate synthase family. LeuA type 1 subfamily. As to quaternary structure, homodimer. The cofactor is Mn(2+).

Its subcellular location is the cytoplasm. It carries out the reaction 3-methyl-2-oxobutanoate + acetyl-CoA + H2O = (2S)-2-isopropylmalate + CoA + H(+). It participates in amino-acid biosynthesis; L-leucine biosynthesis; L-leucine from 3-methyl-2-oxobutanoate: step 1/4. Its function is as follows. Catalyzes the condensation of the acetyl group of acetyl-CoA with 3-methyl-2-oxobutanoate (2-ketoisovalerate) to form 3-carboxy-3-hydroxy-4-methylpentanoate (2-isopropylmalate). The protein is 2-isopropylmalate synthase of Thermotoga neapolitana (strain ATCC 49049 / DSM 4359 / NBRC 107923 / NS-E).